Consider the following 439-residue polypeptide: Telomeric repeat-binding factor 1 (439 aa).

Positions 1–36 are disordered; that stretch reads MAEDVSSAAPSPRGCADGRDADPTEEQMAETERNDE. A2 bears the N-acetylalanine mark. S11 is subject to Phosphoserine. Residues 23–36 are compositionally biased toward acidic residues; the sequence is PTEEQMAETERNDE. Residues 58 to 268 form a TRFH mediates dimerization region; the sequence is EEEEEDAGLV…AAAKVVESKR (211 aa). K213 is covalently cross-linked (Glycyl lysine isopeptide (Lys-Gly) (interchain with G-Cter in SUMO2)). Residue S219 is modified to Phosphoserine; by ATM. The interval 265–378 is interaction with RLIM; it reads ESKRTRTITS…PVTPEKHRAR (114 aa). The tract at residues 266-311 is disordered; the sequence is SKRTRTITSQDKPSGNDVEMETEANLDTRKSVSDKQSAVTESSEGT. Over residues 299–311 the composition is skewed to polar residues; that stretch reads DKQSAVTESSEGT. K325 participates in a covalent cross-link: Glycyl lysine isopeptide (Lys-Gly) (interchain with G-Cter in SUMO2). A disordered region spans residues 326 to 375; it reads LQHGTQQQDLNKKERRVGTPQSTKKKKESRRATESRIPVSKSQPVTPEKH. Positions 337-356 match the Nuclear localization signal motif; sequence KKERRVGTPQSTKKKKESRR. K366 participates in a covalent cross-link: Glycyl lysine isopeptide (Lys-Gly) (interchain with G-Cter in SUMO2). Residues 375–432 form the HTH myb-type domain; it reads HRARKRQAWLWEEDKNLRSGVRKYGEGNWSKILLHYKFNNRTSVMLKDRWRTMKKLKL. The H-T-H motif DNA-binding region spans 403–428; the sequence is WSKILLHYKFNNRTSVMLKDRWRTMK.

Homodimer; can contain both isoforms. Found in a complex with POT1; TINF2 and TNKS1. Interacts with ATM, TINF2, TNKS1, TNKS2, PINX1, NEK2 and MAPRE1. Component of the shelterin complex (telosome) composed of TERF1, TERF2, TINF2, TERF2IP ACD and POT1. Interacts with RLIM (via N-terminus). Interacts with FBXO4. Interaction with TINF2 protects against interaction with FBXO4 and subsequent polyubiquitination and proteasomal degradation. Interacts with GNL3L; this interaction promotes homodimerization. Interacts with TIN2. Interacts with RTEL1. Interactions with GNL3L and TIN2 are mutually exclusive. Interacts with CCDC79/TERB1. Interacts with TRIOBP isoform 1; mediates TERF1 localization to the centrosome. Post-translationally, phosphorylated preferentially on Ser-219 in an ATM-dependent manner in response to ionizing DNA damage. In terms of processing, ADP-ribosylation by TNKS1 or TNKS2 diminishes its ability to bind to telomeric DNA. Ubiquitinated by RLIM/RNF12, leading to its degradation by the proteasome. Ubiquitinated by a SCF (SKP1-CUL1-F-box protein) ubiquitin-protein ligase complex, leading to its degradation by the proteasome. In terms of tissue distribution, highly expressed and ubiquitous. Isoform Pin2 predominates.

The protein resides in the nucleus. Its subcellular location is the cytoplasm. The protein localises to the cytoskeleton. It localises to the spindle. It is found in the chromosome. The protein resides in the telomere. In terms of biological role, binds the telomeric double-stranded 5'-TTAGGG-3' repeat and negatively regulates telomere length. Involved in the regulation of the mitotic spindle. Component of the shelterin complex (telosome) that is involved in the regulation of telomere length and protection. Shelterin associates with arrays of double-stranded 5'-TTAGGG-3' repeats added by telomerase and protects chromosome ends; without its protective activity, telomeres are no longer hidden from the DNA damage surveillance and chromosome ends are inappropriately processed by DNA repair pathways. This chain is Telomeric repeat-binding factor 1 (TERF1), found in Homo sapiens (Human).